A 217-amino-acid chain; its full sequence is Phosphoenolpyruvate guanylyltransferase (217 aa).

Thr150, Gly165, and Ser168 together coordinate phosphoenolpyruvate.

It belongs to the CofC family.

It carries out the reaction phosphoenolpyruvate + GTP + H(+) = enolpyruvoyl-2-diphospho-5'-guanosine + diphosphate. It participates in cofactor biosynthesis; coenzyme F420 biosynthesis. Functionally, guanylyltransferase that catalyzes the activation of phosphoenolpyruvate (PEP) as enolpyruvoyl-2-diphospho-5'-guanosine, via the condensation of PEP with GTP. It is involved in the biosynthesis of coenzyme F420, a hydride carrier cofactor. The protein is Phosphoenolpyruvate guanylyltransferase of Mycobacterium ulcerans (strain Agy99).